Consider the following 207-residue polypeptide: Small ribosomal subunit protein uS4 (207 aa).

The disordered stretch occupies residues lysine 31–glutamine 55. Polar residues predominate over residues glycine 42 to glycine 53. The S4 RNA-binding domain occupies serine 97–leucine 160.

The protein belongs to the universal ribosomal protein uS4 family. As to quaternary structure, part of the 30S ribosomal subunit. Contacts protein S5. The interaction surface between S4 and S5 is involved in control of translational fidelity.

Its function is as follows. One of the primary rRNA binding proteins, it binds directly to 16S rRNA where it nucleates assembly of the body of the 30S subunit. Functionally, with S5 and S12 plays an important role in translational accuracy. The sequence is that of Small ribosomal subunit protein uS4 from Burkholderia multivorans (strain ATCC 17616 / 249).